Here is a 102-residue protein sequence, read N- to C-terminus: Urease subunit beta (102 aa).

This sequence belongs to the urease beta subunit family. In terms of assembly, heterotrimer of UreA (gamma), UreB (beta) and UreC (alpha) subunits. Three heterotrimers associate to form the active enzyme.

It localises to the cytoplasm. It carries out the reaction urea + 2 H2O + H(+) = hydrogencarbonate + 2 NH4(+). Its pathway is nitrogen metabolism; urea degradation; CO(2) and NH(3) from urea (urease route): step 1/1. The polypeptide is Urease subunit beta (Acinetobacter baumannii (strain ACICU)).